We begin with the raw amino-acid sequence, 122 residues long: MIQTETMLDVADNSGARRVQCIKVLGGSHRRYASVGDIIKVTVKEAIPRARVKKGDVMNAVVVRTKFGIRRPDGSVIRFDDNAAVILNNNKAPIATRIFGPVTRELRIEQFMKIISLAPEVL.

It belongs to the universal ribosomal protein uL14 family. As to quaternary structure, part of the 50S ribosomal subunit. Forms a cluster with proteins L3 and L19. In the 70S ribosome, L14 and L19 interact and together make contacts with the 16S rRNA in bridges B5 and B8.

Functionally, binds to 23S rRNA. Forms part of two intersubunit bridges in the 70S ribosome. This Acinetobacter baumannii (strain SDF) protein is Large ribosomal subunit protein uL14.